The following is a 1202-amino-acid chain: Inner capsid protein VP3 (1202 aa).

2 disordered regions span residues Met1–Ile45 and Tyr73–Thr99. Residues Asn10–Thr21 are compositionally biased toward basic and acidic residues. Polar residues predominate over residues Asn27–Ile45.

This sequence belongs to the turreted BTV-fold inner capsid family. Homodecamer; each decamer is made up of two conformers of VP2, called VP2A and VP2B. 12 homodecamers assemble to form an icosahedral capsid.

It localises to the virion. In terms of biological role, inner capsid protein that self-assembles to form an icosahedral capsid with a T=2 symmetry, which consists of 120 copies of VP2, with channels at each of its five-fold vertices. This capsid constitutes the innermost concentric layer of the viral mature particle. In Aedes pseudoscutellaris reovirus (isolate France) (ApRV), this protein is Inner capsid protein VP3 (S3).